The primary structure comprises 1012 residues: ATP-dependent DNA helicase MPH1 (1012 aa).

Residues 94–261 enclose the Helicase ATP-binding domain; sequence IVQKSLYQNT…EVVNNLNISN (168 aa). 107-114 contacts ATP; that stretch reads IPTGMGKT. Residues 209–212 carry the DEAH box motif; sequence DEAH. A Helicase C-terminal domain is found at 430–654; sequence KLQKIINELS…NFVEYKKSDR (225 aa). Positions 493 to 555 are disordered; it reads DEGFIRKNKP…AQISGMNQKQ (63 aa). Residues 498-510 are compositionally biased toward basic residues; sequence RKNKPKGRKKADR. Over residues 511-537 the composition is skewed to basic and acidic residues; sequence LKRLEEDKQKQLSKAKQKEQEKVERSS.

This sequence belongs to the DEAD box helicase family. DEAH subfamily. FANCM sub-subfamily. In terms of assembly, interacts with the MHF histone-fold complex to form the FANCM-MHF complex.

It is found in the nucleus. The enzyme catalyses ATP + H2O = ADP + phosphate + H(+). Its function is as follows. ATP-dependent DNA helicase involved in DNA damage repair by homologous recombination and in genome maintenance. Capable of unwinding D-loops. Plays a role in limiting crossover recombinants during mitotic DNA double-strand break (DSB) repair. Component of a FANCM-MHF complex which promotes gene conversion at blocked replication forks, probably by reversal of the stalled fork. In Vanderwaltozyma polyspora (strain ATCC 22028 / DSM 70294 / BCRC 21397 / CBS 2163 / NBRC 10782 / NRRL Y-8283 / UCD 57-17) (Kluyveromyces polysporus), this protein is ATP-dependent DNA helicase MPH1.